Consider the following 96-residue polypeptide: Putative defensin-like protein 236 (96 aa).

The N-terminal stretch at 1 to 23 (MKNATSLIIYCFLMFLLMNNVKG) is a signal peptide. 4 cysteine pairs are disulfide-bonded: cysteine 31/cysteine 93, cysteine 41/cysteine 70, cysteine 49/cysteine 83, and cysteine 68/cysteine 85.

The protein belongs to the DEFL family.

It localises to the secreted. The sequence is that of Putative defensin-like protein 236 (SCRL20) from Arabidopsis thaliana (Mouse-ear cress).